Consider the following 228-residue polypeptide: Urease accessory protein UreF (228 aa).

It belongs to the UreF family. As to quaternary structure, ureD, UreF and UreG form a complex that acts as a GTP-hydrolysis-dependent molecular chaperone, activating the urease apoprotein by helping to assemble the nickel containing metallocenter of UreC. The UreE protein probably delivers the nickel.

It localises to the cytoplasm. Functionally, required for maturation of urease via the functional incorporation of the urease nickel metallocenter. The chain is Urease accessory protein UreF from Photorhabdus laumondii subsp. laumondii (strain DSM 15139 / CIP 105565 / TT01) (Photorhabdus luminescens subsp. laumondii).